We begin with the raw amino-acid sequence, 973 residues long: E3 ubiquitin-protein ligase BRE1A (973 aa).

A disordered region spans residues 1-37; sequence MSGIGNKRAAGEPGTSMPPEKKTAVEDSGTTVETIKL. Residue K21 is modified to N6-acetyllysine. S41 carries the phosphoserine modification. A coiled-coil region spans residues 43–90; sequence TEELDIRTLQSKNRKLAEMLDQRQAIEDELREHIEKLERRQATDDASL. The tract at residues 128–153 is disordered; that stretch reads VVPEPEPDSDSNQERKDDRERGDGQE. S136 and S138 each carry phosphoserine. The segment covering 139–151 has biased composition (basic and acidic residues); the sequence is NQERKDDRERGDG. Coiled coils occupy residues 168–378 and 429–896; these read EEME…VKET and SLHK…TTKK. Residues K348 and K510 each carry the N6-acetyllysine modification. The interval 507–620 is disordered; that stretch reads DLNKTRLRSG…GKHDDGRKKE (114 aa). Residue S522 is modified to Phosphoserine. 2 stretches are compositionally biased toward basic and acidic residues: residues 527 to 544 and 553 to 620; these read EDPKDEPTELKQDSEDLA and SQED…RKKE. S560 carries the phosphoserine modification. An RING-type zinc finger spans residues 920-959; that stretch reads CPCCNMRKKDAVLTKCFHVFCFECVKTRYDTRQRKCPKCN.

Belongs to the BRE1 family. As to quaternary structure, component of the RNF20/40 complex (also known as BRE1 complex) probably composed of 2 copies of RNF20/BRE1A and 2 copies of RNF40/BRE1B. Interacts with UBE2E1/UBCH6. Interacts with p53/TP53 and WAC. Interacts with PAF1; the interaction mediates the association of the PAF1 and RNF20/40 complexes which is a prerequsite for recruitment of UBE2A/B. Interacts with PA2G4. Interacts with FBXL19.

The protein localises to the nucleus. It catalyses the reaction S-ubiquitinyl-[E2 ubiquitin-conjugating enzyme]-L-cysteine + [acceptor protein]-L-lysine = [E2 ubiquitin-conjugating enzyme]-L-cysteine + N(6)-ubiquitinyl-[acceptor protein]-L-lysine.. The protein operates within protein modification; protein ubiquitination. Its function is as follows. Component of the RNF20/40 E3 ubiquitin-protein ligase complex that mediates monoubiquitination of 'Lys-120' of histone H2B (H2BK120ub1). H2BK120ub1 gives a specific tag for epigenetic transcriptional activation and is also prerequisite for histone H3 'Lys-4' and 'Lys-79' methylation (H3K4me and H3K79me, respectively). It thereby plays a central role in histone code and gene regulation. The RNF20/40 complex forms a H2B ubiquitin ligase complex in cooperation with the E2 enzyme UBE2A or UBE2B; reports about the cooperation with UBE2E1/UBCH are contradictory. Required for transcriptional activation of Hox genes. Recruited to the MDM2 promoter, probably by being recruited by p53/TP53, and thereby acts as a transcriptional coactivator. Mediates the polyubiquitination of PA2G4 leading to its proteasome-mediated degradation. This chain is E3 ubiquitin-protein ligase BRE1A (Rnf20), found in Mus musculus (Mouse).